Here is a 535-residue protein sequence, read N- to C-terminus: Cytochrome P450 71C3 (535 aa).

The helical transmembrane segment at 23-43 (QTLTLLLIAVPTVLLLLASLA) threads the bilayer. Residue Cys475 coordinates heme.

The protein belongs to the cytochrome P450 family. Heme is required as a cofactor.

The protein localises to the membrane. The protein operates within secondary metabolite biosynthesis; 2,4-dihydroxy-1,4-benzoxazin-3-one biosynthesis; 2,4-dihydroxy-1,4-benzoxazin-3-one from indoleglycerol phosphate: step 5/5. In terms of biological role, catalyzes the conversion of 2-hydroxy-1,4-benzoxazin-3-one (HBOA) to 2,4-dihydroxy-1,4-benzoxazin-3-one (DIBOA). This is Cytochrome P450 71C3 (CYP71C3) from Zea mays (Maize).